The following is a 78-amino-acid chain: MSRVCELSGTRANNGMAVSHSHIRTKKLQQANLQKRRLWWEEGKKWLNIRVSTSTLKTIQKKGLDSYAKSQGIDLKKL.

The protein belongs to the bacterial ribosomal protein bL28 family.

The protein is Large ribosomal subunit protein bL28 of Prochlorococcus marinus (strain SARG / CCMP1375 / SS120).